Reading from the N-terminus, the 894-residue chain is Leucine--tRNA ligase, mitochondrial (894 aa).

The transit peptide at 1 to 9 (MLSRPSSRF) directs the protein to the mitochondrion. The short motif at 56–66 (PYPSGALHIGH) is the 'HIGH' region element. The short motif at 646-650 (KMSKS) is the 'KMSKS' region element. Lys649 contributes to the ATP binding site.

Belongs to the class-I aminoacyl-tRNA synthetase family.

The protein localises to the mitochondrion matrix. It carries out the reaction tRNA(Leu) + L-leucine + ATP = L-leucyl-tRNA(Leu) + AMP + diphosphate. Its function is as follows. Catalyzes the attachment of leucine to tRNA(Leu) in the mitochondrion. This is Leucine--tRNA ligase, mitochondrial (NAM2) from Saccharomyces cerevisiae (strain ATCC 204508 / S288c) (Baker's yeast).